The following is a 192-amino-acid chain: MADTLGKSELEVIKPQKREIRKGQVRKHIITVKVRNEMGVLARIATLIAGKGYNIEGLSVGETHEKGISRMTIEVIGDDIVIEQVVKQLRRLIDTLKVSDLTDVPHVERELALIKVYTPSSRARDEVLRITEIFRGKVVDVSPDTYTIEVTGDEDKINAMIELLKPFGIKEMARTGKVAMRREMSIKEEENE.

Residues 29 to 103 (IITVKVRNEM…DTLKVSDLTD (75 aa)) form the ACT domain.

Belongs to the acetolactate synthase small subunit family. As to quaternary structure, dimer of large and small chains.

The enzyme catalyses 2 pyruvate + H(+) = (2S)-2-acetolactate + CO2. It participates in amino-acid biosynthesis; L-isoleucine biosynthesis; L-isoleucine from 2-oxobutanoate: step 1/4. Its pathway is amino-acid biosynthesis; L-valine biosynthesis; L-valine from pyruvate: step 1/4. In Aquifex aeolicus (strain VF5), this protein is Acetolactate synthase small subunit (ilvH).